Consider the following 583-residue polypeptide: Afadin- and alpha-actinin-binding protein (583 aa).

Coiled coils occupy residues 108–220, 255–333, and 420–453; these read NNVE…LAIE, DYEA…QLTN, and EEKE…AIRL. A disordered region spans residues 285-328; sequence LSPCPPLNRGGSAEESQELGDSDREERSAETSRETLDQSCEHAR. The span at 305–328 shows a compositional bias: basic and acidic residues; that stretch reads DSDREERSAETSRETLDQSCEHAR. Positions 480 to 527 are disordered; sequence DRMRSSSSDGQSALSVKSEPEIRTSSSKAPPVKSSAYTTFSTPKSSKS. The segment covering 484 to 494 has biased composition (polar residues); sequence SSSSDGQSALS. Over residues 504 to 515 the composition is skewed to low complexity; the sequence is SSSKAPPVKSSA. Residues 516–527 are compositionally biased toward polar residues; sequence YTTFSTPKSSKS.

The protein belongs to the ADIP family.

Its subcellular location is the cell junction. It localises to the adherens junction. It is found in the cytoplasm. The protein localises to the cytoskeleton. The protein resides in the microtubule organizing center. Its subcellular location is the centrosome. It localises to the centriolar satellite. Functionally, belongs to an adhesion system, which plays a role in the organization of homotypic, interneuronal and heterotypic cell-cell adherens junctions (AJs). Involved in cell movement. Acts as a centrosome maturation factor, probably by maintaining the integrity of the pericentriolar material and proper microtubule nucleation at mitotic spindle poles. In Oryzias latipes (Japanese rice fish), this protein is Afadin- and alpha-actinin-binding protein (ssx2ip).